The following is a 310-amino-acid chain: MGDNITSIREFLLLGFPVGPRIQMLLFGLFSLFYVFTLLGNGTILGLISLDSRLHAPMYFFLSHLAVVDIAYACNTVPRMLVNLLHPAKPISFAGRMMQTFLFSTFAVTECLLLVVMSYDLYVAICHPLRYLAIMTWRVCITLAVTSWTTGVLLSLIHLVLLLPLPFCRPQKIYHFFCEILAVLKLACADTHINENMVLAGAISGLVGPLSTIVVSYMCILCAILQIQSREVQRKAFRTCFSHLCVIGLVYGTAIIMYVGPRYGNPKEQKKYLLLFHSLFNPMLNPLICSLRNSEVKNTLKRVLGVERAL.

Residues 1 to 24 lie on the Extracellular side of the membrane; sequence MGDNITSIREFLLLGFPVGPRIQM. N4 carries N-linked (GlcNAc...) asparagine glycosylation. The helical transmembrane segment at 25–48 threads the bilayer; it reads LLFGLFSLFYVFTLLGNGTILGLI. Residues 49–56 lie on the Cytoplasmic side of the membrane; the sequence is SLDSRLHA. The chain crosses the membrane as a helical span at residues 57 to 78; sequence PMYFFLSHLAVVDIAYACNTVP. Residues 79-99 are Extracellular-facing; that stretch reads RMLVNLLHPAKPISFAGRMMQ. The helical transmembrane segment at 100–119 threads the bilayer; sequence TFLFSTFAVTECLLLVVMSY. The Cytoplasmic segment spans residues 120-138; sequence DLYVAICHPLRYLAIMTWR. Residues 139 to 157 traverse the membrane as a helical segment; sequence VCITLAVTSWTTGVLLSLI. Residues 158–194 are Extracellular-facing; that stretch reads HLVLLLPLPFCRPQKIYHFFCEILAVLKLACADTHIN. Residues 195–218 form a helical membrane-spanning segment; it reads ENMVLAGAISGLVGPLSTIVVSYM. Topologically, residues 219–235 are cytoplasmic; the sequence is CILCAILQIQSREVQRK. A helical membrane pass occupies residues 236 to 258; that stretch reads AFRTCFSHLCVIGLVYGTAIIMY. Topologically, residues 259 to 271 are extracellular; that stretch reads VGPRYGNPKEQKK. Residues 272-291 form a helical membrane-spanning segment; that stretch reads YLLLFHSLFNPMLNPLICSL. The Cytoplasmic portion of the chain corresponds to 292–310; sequence RNSEVKNTLKRVLGVERAL.

The protein belongs to the G-protein coupled receptor 1 family.

It is found in the cell membrane. Functionally, odorant receptor. The polypeptide is Olfactory receptor 2A4 (OR2A4) (Homo sapiens (Human)).